Reading from the N-terminus, the 146-residue chain is Cyanate hydratase (146 aa).

Catalysis depends on residues Arg87, Glu90, and Ser113.

It belongs to the cyanase family.

It catalyses the reaction cyanate + hydrogencarbonate + 3 H(+) = NH4(+) + 2 CO2. Catalyzes the reaction of cyanate with bicarbonate to produce ammonia and carbon dioxide. In Teredinibacter turnerae (strain ATCC 39867 / T7901), this protein is Cyanate hydratase.